We begin with the raw amino-acid sequence, 30 residues long: Dermaseptin-J10 (30 aa).

As to expression, expressed by the skin glands.

It is found in the secreted. Functionally, has antimicrobial activity. The polypeptide is Dermaseptin-J10 (Phasmahyla jandaia (Jandaia leaf frog)).